We begin with the raw amino-acid sequence, 306 residues long: Plant-type L-asparaginase (306 aa).

The active-site Nucleophile is threonine 176. Substrate-binding positions include 203-206 and 225-228; these read RVGD and TGLG.

It belongs to the Ntn-hydrolase family. As to quaternary structure, heterotetramer of two alpha and two beta chains arranged as a dimer of alpha/beta heterodimers. In terms of processing, autocleaved. Generates the alpha and beta subunits. The N-terminal residue of the beta subunit is thought to be responsible for the nucleophile hydrolase activity.

The catalysed reaction is L-asparagine + H2O = L-aspartate + NH4(+). Its function is as follows. Catalyzes the hydrolysis of L-asparagine into L-aspartate and ammonia. This Pyrococcus furiosus (strain ATCC 43587 / DSM 3638 / JCM 8422 / Vc1) protein is Plant-type L-asparaginase.